Here is a 295-residue protein sequence, read N- to C-terminus: N-acetylmuramic acid 6-phosphate etherase (295 aa).

One can recognise an SIS domain in the interval 53-216 (TTEQFKQGGR…STITMVGVGK (164 aa)). Catalysis depends on Glu-81, which acts as the Proton donor. Glu-112 is a catalytic residue.

The protein belongs to the GCKR-like family. MurNAc-6-P etherase subfamily. As to quaternary structure, homodimer.

The enzyme catalyses N-acetyl-D-muramate 6-phosphate + H2O = N-acetyl-D-glucosamine 6-phosphate + (R)-lactate. It functions in the pathway amino-sugar metabolism; N-acetylmuramate degradation. Functionally, specifically catalyzes the cleavage of the D-lactyl ether substituent of MurNAc 6-phosphate, producing GlcNAc 6-phosphate and D-lactate. This is N-acetylmuramic acid 6-phosphate etherase from Staphylococcus saprophyticus subsp. saprophyticus (strain ATCC 15305 / DSM 20229 / NCIMB 8711 / NCTC 7292 / S-41).